The primary structure comprises 250 residues: Ribonuclease 3 (250 aa).

Positions 1–15 (MTKTPAKKKRARSSK) are enriched in basic residues. Residues 1–21 (MTKTPAKKKRARSSKAKGTDA) are disordered. Positions 22–150 (NAALEARIGH…VIGAIFLDGG (129 aa)) constitute an RNase III domain. Position 63 (Glu63) interacts with Mg(2+). Asp67 is a catalytic residue. 2 residues coordinate Mg(2+): Asp136 and Glu139. The active site involves Glu139. Residues 175–244 (DPKTVLQEWA…ASVMIEREGV (70 aa)) form the DRBM domain.

This sequence belongs to the ribonuclease III family. As to quaternary structure, homodimer. The cofactor is Mg(2+).

Its subcellular location is the cytoplasm. It carries out the reaction Endonucleolytic cleavage to 5'-phosphomonoester.. Digests double-stranded RNA. Involved in the processing of primary rRNA transcript to yield the immediate precursors to the large and small rRNAs (23S and 16S). Processes some mRNAs, and tRNAs when they are encoded in the rRNA operon. Processes pre-crRNA and tracrRNA of type II CRISPR loci if present in the organism. This chain is Ribonuclease 3, found in Bradyrhizobium diazoefficiens (strain JCM 10833 / BCRC 13528 / IAM 13628 / NBRC 14792 / USDA 110).